The chain runs to 201 residues: Probable quinol oxidase subunit 3 (201 aa).

Helical transmembrane passes span 20-40, 62-82, 91-111, 133-153, and 180-200; these read LGFW…FATL, LVLI…IAIY, LMLI…GFEI, FFIL…WIIC, and FLDV…MVFS.

This sequence belongs to the cytochrome c oxidase subunit 3 family.

The protein resides in the cell membrane. The catalysed reaction is 2 a quinol + O2 = 2 a quinone + 2 H2O. In terms of biological role, catalyzes quinol oxidation with the concomitant reduction of oxygen to water. The polypeptide is Probable quinol oxidase subunit 3 (qoxC) (Staphylococcus saprophyticus subsp. saprophyticus (strain ATCC 15305 / DSM 20229 / NCIMB 8711 / NCTC 7292 / S-41)).